Here is a 373-residue protein sequence, read N- to C-terminus: Peptidoglycan recognition protein 4 (373 aa).

The signal sequence occupies residues 1–17; sequence MLPWLLVFSALGIQAWG. Residues asparagine 22, asparagine 39, asparagine 109, asparagine 145, and asparagine 247 are each glycosylated (N-linked (GlcNAc...) asparagine). N-acetylmuramoyl-L-alanine amidase domains lie at 74-212 and 235-358; these read TPVN…ACPG and YGII…LSPG. Intrachain disulfides connect cysteine 210-cysteine 332, cysteine 226-cysteine 270, and cysteine 246-cysteine 252. Residues tyrosine 263 and tyrosine 274 each coordinate peptidoglycan. Interaction with murein stretches follow at residues 293 to 302 and 353 to 354; these read QGSSTPGYDD and RT.

The protein belongs to the N-acetylmuramoyl-L-alanine amidase 2 family. As to quaternary structure, homodimer; disulfide-linked. Heterodimer with PGLYRP3; disulfide-linked. Post-translationally, N-glycosylated. As to expression, detected in skin epidermis, eccrine sweat glands and ducts, mucous cells in the submandibular salivary gland, mucous cells in the throat, ciliary body epithelial cells of the eye, small intestine, colon, stomach and in mature epithelial cells of the tongue (at protein level). High expression in skin and esophagus. Expressed also to a much lesser extent in the tonsils and thymus.

Its subcellular location is the secreted. Its function is as follows. Pattern receptor that binds to murein peptidoglycans (PGN) of Gram-positive bacteria. Has bactericidal activity towards Gram-positive bacteria. May kill Gram-positive bacteria by interfering with peptidoglycan biosynthesis. Also binds to Gram-negative bacteria, and has bacteriostatic activity towards Gram-negative bacteria. Plays a role in innate immunity. The chain is Peptidoglycan recognition protein 4 (PGLYRP4) from Homo sapiens (Human).